Consider the following 351-residue polypeptide: Dysbindin (351 aa).

A coiled-coil region spans residues 106–179; that stretch reads FLADLECLTA…AELDAEHAQK (74 aa). The tract at residues 291-325 is disordered; it reads RHKLSSLSSTCTDSASQEASEGESPVVQSDEEEVQ. Low complexity predominate over residues 295-306; it reads SSLSSTCTDSAS.

Belongs to the dysbindin family. As to quaternary structure, component of the biogenesis of lysosome-related organelles complex 1 (BLOC-1).

It is found in the cytoplasm. It localises to the cytoplasmic vesicle membrane. The protein localises to the cytoplasmic vesicle. The protein resides in the secretory vesicle. Its subcellular location is the synaptic vesicle membrane. It is found in the endosome membrane. It localises to the melanosome membrane. The protein localises to the nucleus. The protein resides in the postsynaptic density. Its subcellular location is the endoplasmic reticulum. In terms of biological role, component of the BLOC-1 complex, a complex that is required for normal biogenesis of lysosome-related organelles (LRO), such as platelet dense granules and melanosomes. Plays a role in intracellular vesicle trafficking. Plays a role in synaptic vesicle trafficking and in neurotransmitter release. May be required for normal dopamine homeostasis in the cerebral cortex, hippocampus, and hypothalamus. Plays a role in the regulation of cell surface exposure of DRD2. Contributes to the regulation of dopamine signaling. May play a role in actin cytoskeleton reorganization and neurite outgrowth. The polypeptide is Dysbindin (DTNBP1) (Gallus gallus (Chicken)).